We begin with the raw amino-acid sequence, 1236 residues long: ESX-4 secretion system protein EccC4 (1236 aa).

2 helical membrane passes run 32 to 52 and 59 to 79; these read LLPV…FLPG and PTFL…AVTG. FtsK domains are found at residues 407 to 607, 747 to 936, and 1018 to 1201; these read GTAV…SESR, RVPL…ADSE, and GQPV…DEGA. ATP is bound by residues 430 to 437, 765 to 772, and 1035 to 1042; these read GATGSGKS, GAPQTGKS, and GDNECGKT.

Part of the ESX-4 / type VII secretion system (T7SS), which is composed of cytosolic and membrane components.

It is found in the cell membrane. This chain is ESX-4 secretion system protein EccC4 (eccC4), found in Mycobacterium tuberculosis (strain ATCC 25618 / H37Rv).